We begin with the raw amino-acid sequence, 415 residues long: WD-40 repeat-containing protein MSI2 (415 aa).

5 WD repeats span residues 166-206 (GHDK…QDKV), 215-255 (GHES…MQHQ), 258-298 (VHER…APLH), 302-342 (SHEG…EEQL), and 361-401 (GHKA…YRDE). The DWD box motif lies at 232 to 248 (LFGSAGEDGRLVIWDTR).

This sequence belongs to the WD repeat RBAP46/RBAP48/MSI1 family.

It is found in the nucleus. Its function is as follows. Core histone-binding subunit that may target chromatin assembly factors, chromatin remodeling factors and histone deacetylases to their histone substrates in a manner that is regulated by nucleosomal DNA. This chain is WD-40 repeat-containing protein MSI2 (MSI2), found in Arabidopsis thaliana (Mouse-ear cress).